The following is a 184-amino-acid chain: Large ribosomal subunit protein uL6 (184 aa).

Belongs to the universal ribosomal protein uL6 family. Part of the 50S ribosomal subunit.

In terms of biological role, this protein binds to the 23S rRNA, and is important in its secondary structure. It is located near the subunit interface in the base of the L7/L12 stalk, and near the tRNA binding site of the peptidyltransferase center. The chain is Large ribosomal subunit protein uL6 from Methanosphaera stadtmanae (strain ATCC 43021 / DSM 3091 / JCM 11832 / MCB-3).